The chain runs to 89 residues: Small ribosomal subunit protein uS19 (89 aa).

Belongs to the universal ribosomal protein uS19 family.

In terms of biological role, protein S19 forms a complex with S13 that binds strongly to the 16S ribosomal RNA. The chain is Small ribosomal subunit protein uS19 from Vesicomyosocius okutanii subsp. Calyptogena okutanii (strain HA).